Consider the following 163-residue polypeptide: Phosphopantetheine adenylyltransferase (163 aa).

A substrate-binding site is contributed by serine 9. ATP contacts are provided by residues 9–10 (SF) and histidine 17. Substrate-binding residues include lysine 41, threonine 73, and arginine 87. Residues 88-90 (GLR), glutamate 98, and 123-129 (YSFISSG) contribute to the ATP site.

It belongs to the bacterial CoaD family. In terms of assembly, homohexamer. The cofactor is Mg(2+).

Its subcellular location is the cytoplasm. It carries out the reaction (R)-4'-phosphopantetheine + ATP + H(+) = 3'-dephospho-CoA + diphosphate. It functions in the pathway cofactor biosynthesis; coenzyme A biosynthesis; CoA from (R)-pantothenate: step 4/5. In terms of biological role, reversibly transfers an adenylyl group from ATP to 4'-phosphopantetheine, yielding dephospho-CoA (dPCoA) and pyrophosphate. The protein is Phosphopantetheine adenylyltransferase of Desulforudis audaxviator (strain MP104C).